Consider the following 186-residue polypeptide: MEPTRDCPLFGGAFSAILPMGAIDVSDLRPVPDNQEVFCHPVTDQSLIVELLELQAHVRGEAAARYHFEDVGGVQGARAVHVESVQPLSLENLALRGRCQEAWVLSGKQQIAKENQQVAKDVTLHQALLRLPQYQTDLLLTFNQPPPDNRSSLGPENLSPAPWSLGDFEQLVTSLTLHDPNIFGPQ.

Residues 27–70 (DLRPVPDNQEVFCHPVTDQSLIVELLELQAHVRGEAAARYHFED) are interaction with RAN.

This sequence belongs to the MOG1 family. Monomer. Interacts with RAN, both RAN-GTP and RAN-GDP. Competes with RCC1 for a common binding site on RAN and thereby inhibits RCC1-mediated nucleotide exchange. Forms a complex with RAN-GTP and RANBP1. Interacts with the cytoplasmic loop 2 of SCN5A. In terms of tissue distribution, isoform 1 and isoform 2 are ubiquitously expressed. Detected in heart and brain.

The protein resides in the nucleus. It is found in the cytoplasm. Its subcellular location is the perinuclear region. It localises to the cell membrane. May regulate the intracellular trafficking of RAN. Promotes guanine nucleotide release from RAN and inhibits binding of new GTP by preventing the binding of the RAN guanine nucleotide exchange factor RCC1. Regulates the levels of GTP-bound RAN in the nucleus, and thereby plays a role in the regulation of RAN-dependent mitotic spindle dynamics. Enhances the expression of SCN5A at the cell membrane in cardiomyocytes. In Homo sapiens (Human), this protein is Ran guanine nucleotide release factor (RANGRF).